Reading from the N-terminus, the 476-residue chain is Glucose-1-phosphate adenylyltransferase (476 aa).

Alpha-D-glucose 1-phosphate contacts are provided by residues tyrosine 114, glycine 179, 194–195 (EK), and serine 212.

It belongs to the bacterial/plant glucose-1-phosphate adenylyltransferase family. Homotetramer.

It catalyses the reaction alpha-D-glucose 1-phosphate + ATP + H(+) = ADP-alpha-D-glucose + diphosphate. The protein operates within glycan biosynthesis; glycogen biosynthesis. In terms of biological role, involved in the biosynthesis of ADP-glucose, a building block required for the elongation reactions to produce glycogen. Catalyzes the reaction between ATP and alpha-D-glucose 1-phosphate (G1P) to produce pyrophosphate and ADP-Glc. This chain is Glucose-1-phosphate adenylyltransferase, found in Yersinia pestis.